The primary structure comprises 421 residues: 4-hydroxy-3-methylbut-2-en-1-yl diphosphate synthase (flavodoxin) (421 aa).

Positions 311, 314, 357, and 364 each coordinate [4Fe-4S] cluster.

The protein belongs to the IspG family. [4Fe-4S] cluster serves as cofactor.

The catalysed reaction is (2E)-4-hydroxy-3-methylbut-2-enyl diphosphate + oxidized [flavodoxin] + H2O + 2 H(+) = 2-C-methyl-D-erythritol 2,4-cyclic diphosphate + reduced [flavodoxin]. It functions in the pathway isoprenoid biosynthesis; isopentenyl diphosphate biosynthesis via DXP pathway; isopentenyl diphosphate from 1-deoxy-D-xylulose 5-phosphate: step 5/6. Its function is as follows. Converts 2C-methyl-D-erythritol 2,4-cyclodiphosphate (ME-2,4cPP) into 1-hydroxy-2-methyl-2-(E)-butenyl 4-diphosphate. In Xanthomonas oryzae pv. oryzae (strain MAFF 311018), this protein is 4-hydroxy-3-methylbut-2-en-1-yl diphosphate synthase (flavodoxin).